Here is a 446-residue protein sequence, read N- to C-terminus: UDP-N-acetylmuramoylalanine--D-glutamate ligase (446 aa).

115–121 (GSNGKST) serves as a coordination point for ATP.

The protein belongs to the MurCDEF family.

The protein localises to the cytoplasm. The enzyme catalyses UDP-N-acetyl-alpha-D-muramoyl-L-alanine + D-glutamate + ATP = UDP-N-acetyl-alpha-D-muramoyl-L-alanyl-D-glutamate + ADP + phosphate + H(+). Its pathway is cell wall biogenesis; peptidoglycan biosynthesis. Functionally, cell wall formation. Catalyzes the addition of glutamate to the nucleotide precursor UDP-N-acetylmuramoyl-L-alanine (UMA). This is UDP-N-acetylmuramoylalanine--D-glutamate ligase from Hahella chejuensis (strain KCTC 2396).